Here is a 119-residue protein sequence, read N- to C-terminus: UPF0145 protein Bcep18194_B0595 (119 aa).

This sequence belongs to the UPF0145 family.

This is UPF0145 protein Bcep18194_B0595 from Burkholderia lata (strain ATCC 17760 / DSM 23089 / LMG 22485 / NCIMB 9086 / R18194 / 383).